Consider the following 303-residue polypeptide: Guanosine-inosine kinase (303 aa).

It belongs to the carbohydrate kinase PfkB family. As to quaternary structure, homodimer. It depends on Mg(2+) as a cofactor.

The enzyme catalyses guanosine + ATP = GMP + ADP + H(+). It carries out the reaction inosine + ATP = IMP + ADP + H(+). It participates in purine metabolism; IMP biosynthesis via salvage pathway; IMP from inosine: step 1/1. The protein operates within purine metabolism; GMP biosynthesis via salvage pathway. Kinase activity is stimulated by pyrimidine nucleotides, especially CMP and CTP, and inhibited by AMP, ADP and GMP. Activity is stimulated by potassium or ammonium ions. In terms of biological role, catalyzes the phosphorylation of guanosine and inosine to GMP and IMP, respectively. Can also use deoxyguanosine. Shows a strong preference for guanosine. dATP, GTP and dGTP can serve as phosphate donors. The protein is Guanosine-inosine kinase of Exiguobacterium acetylicum (Brevibacterium acetylicum).